The sequence spans 947 residues: Translation initiation factor IF-2 (947 aa).

The segment at 61-284 (IQANQPAKNP…TAKNNKSHKI (224 aa)) is disordered. Over residues 151-169 (QIEKAKQKLQEIQKSREAL) the composition is skewed to basic and acidic residues. Residues 175-188 (SNANNANSTNNANN) are compositionally biased toward low complexity. Positions 189-206 (AKKEISEVKKQEQEIKRH) are enriched in basic and acidic residues. Residues 207-218 (ENIKRRTGFRVI) show a composition bias toward basic residues. Residues 247–262 (EDIKKEWQEKDKQEAK) show a composition bias toward basic and acidic residues. The tr-type G domain occupies 446 to 615 (ERPPVVTIMG…LIQADIMELK (170 aa)). The segment at 455-462 (GHVDHGKT) is G1. 455–462 (GHVDHGKT) contributes to the GTP binding site. The interval 480–484 (GITQH) is G2. The G3 stretch occupies residues 501–504 (DTPG). Residues 501 to 505 (DTPGH) and 555 to 558 (NKMD) contribute to the GTP site. Residues 555 to 558 (NKMD) are G4. The segment at 591-593 (SAK) is G5.

This sequence belongs to the TRAFAC class translation factor GTPase superfamily. Classic translation factor GTPase family. IF-2 subfamily.

It localises to the cytoplasm. Functionally, one of the essential components for the initiation of protein synthesis. Protects formylmethionyl-tRNA from spontaneous hydrolysis and promotes its binding to the 30S ribosomal subunits. Also involved in the hydrolysis of GTP during the formation of the 70S ribosomal complex. In Helicobacter pylori (strain P12), this protein is Translation initiation factor IF-2.